Consider the following 102-residue polypeptide: MYAIIVTGGKQYKVEAGQAIYVEKLDAAAGDKVTFDQVVFVGGDTTKVGTPTVDGATVEGTVEKQGRDRKVVTFKYKAKKGQHTKKGHRQPYTKVTIDTINA.

Belongs to the bacterial ribosomal protein bL21 family. In terms of assembly, part of the 50S ribosomal subunit. Contacts protein L20.

This protein binds to 23S rRNA in the presence of protein L20. The sequence is that of Large ribosomal subunit protein bL21 from Lactiplantibacillus plantarum (strain ATCC BAA-793 / NCIMB 8826 / WCFS1) (Lactobacillus plantarum).